Consider the following 186-residue polypeptide: Ribosome-recycling factor (186 aa).

Belongs to the RRF family.

It is found in the cytoplasm. Its function is as follows. Responsible for the release of ribosomes from messenger RNA at the termination of protein biosynthesis. May increase the efficiency of translation by recycling ribosomes from one round of translation to another. This Paraburkholderia phymatum (strain DSM 17167 / CIP 108236 / LMG 21445 / STM815) (Burkholderia phymatum) protein is Ribosome-recycling factor.